The following is a 260-amino-acid chain: MSHHWGYSKHNGPENWHKDFPIANGDRQSPVDIDTATAQHDPALQPLLISYDKAASKSIVNNGHSFNVEFDDSQDNAVLKGGPLSDSYRLIQFHFHWGSSDGQGSEHTVNKKKYAAELHLVHWNTKYGDFGKAVQQPDGLAVLGIFLKIGPASQGLQKVLEALHSIKTKGKRAAFANFDPCSLLPGNLDYWTYPGSLTTPPLLECVTWIVLREPITVSSEQMSHFRTLNFNEEGDAEEAMVDNWRPAQPLKNRKIKASFK.

S2 is modified (N-acetylserine). Residue S2 is modified to Phosphoserine. The 257-residue stretch at 3-259 (HHWGYSKHNG…LKNRKIKASF (257 aa)) folds into the Alpha-carbonic anhydrase domain. The active-site Proton acceptor is the H64. The active site involves N67. A Phosphoserine modification is found at S87. The Zn(2+) site is built by H94, H96, and H119. Residue Y127 is part of the active site. Phosphoserine is present on S165. Substrate is bound at residue 198–199 (TT).

It belongs to the alpha-carbonic anhydrase family. Interacts with SLC4A4. Interaction with SLC4A7 regulates SLC4A7 transporter activity. Interacts with SLC26A6. It depends on Zn(2+) as a cofactor.

The protein localises to the cytoplasm. It localises to the cell membrane. It carries out the reaction hydrogencarbonate + H(+) = CO2 + H2O. The enzyme catalyses urea = cyanamide + H2O. With respect to regulation, inhibited by acetazolamide. Its function is as follows. Catalyzes the reversible hydration of carbon dioxide. Can also hydrate cyanamide to urea. Involved in the regulation of fluid secretion into the anterior chamber of the eye. Essential for bone resorption and osteoclast differentiation. Contributes to intracellular pH regulation in the duodenal upper villous epithelium during proton-coupled peptide absorption. Stimulates the chloride-bicarbonate exchange activity of SLC26A6. The sequence is that of Carbonic anhydrase 2 (Ca2) from Mus musculus (Mouse).